Here is a 424-residue protein sequence, read N- to C-terminus: MLDPKRVRTQTEEIARRLAIKNFEFDIATFEQLEERRRAIQVRTENLQSEQNKRSKSIGKAKAAGEDIKPLLEEVESLKQQRGDAEDELRSVQESLNAFFAGIPNLPDDDVPPGASEDDNVETRVWGTPREFDFEPKDHVALGEQLKGLDFEKATQLAHSRFAVMRGQLARLHRALAQFMLDQHTLQHGYTEAYVPYLVNANTLFGTGQLPKFEEDLFRTAGDNPLYLIPTAEVPATNLVADTILDDAELPLRLVCHTPCFRSEAGSYGRDVRGMIRQHQFDKVELVHIVRPDESTQALEELTGHAEKILQLLELPYRVVTLCGGDMGFSAAKTYDLEVWLPGQGKYREISSCSNTRDFQARRMQARWRNPDTGKPEPVHTLNGSGLAVGRAMIAVMENYQQADGSILVPEVLKPYMGGVERIQ.

231-233 (TAE) serves as a coordination point for L-serine. Residue 262-264 (RSE) participates in ATP binding. Glu-285 serves as a coordination point for L-serine. 349 to 352 (EISS) lines the ATP pocket. Ser-385 lines the L-serine pocket.

It belongs to the class-II aminoacyl-tRNA synthetase family. Type-1 seryl-tRNA synthetase subfamily. In terms of assembly, homodimer. The tRNA molecule binds across the dimer.

It is found in the cytoplasm. The enzyme catalyses tRNA(Ser) + L-serine + ATP = L-seryl-tRNA(Ser) + AMP + diphosphate + H(+). It carries out the reaction tRNA(Sec) + L-serine + ATP = L-seryl-tRNA(Sec) + AMP + diphosphate + H(+). The protein operates within aminoacyl-tRNA biosynthesis; selenocysteinyl-tRNA(Sec) biosynthesis; L-seryl-tRNA(Sec) from L-serine and tRNA(Sec): step 1/1. Functionally, catalyzes the attachment of serine to tRNA(Ser). Is also able to aminoacylate tRNA(Sec) with serine, to form the misacylated tRNA L-seryl-tRNA(Sec), which will be further converted into selenocysteinyl-tRNA(Sec). The polypeptide is Serine--tRNA ligase (Marinobacter nauticus (strain ATCC 700491 / DSM 11845 / VT8) (Marinobacter aquaeolei)).